The sequence spans 242 residues: UPF0246 protein SPN23F15130 (242 aa).

The protein belongs to the UPF0246 family.

This Streptococcus pneumoniae (strain ATCC 700669 / Spain 23F-1) protein is UPF0246 protein SPN23F15130.